A 182-amino-acid chain; its full sequence is Interferon beta (182 aa).

An N-terminal signal peptide occupies residues 1–21 (MNNRWILHAAFLLCFSTTALS). Y24 carries the post-translational modification Phosphotyrosine. N50, N90, and N97 each carry an N-linked (GlcNAc...) asparagine glycan.

It belongs to the alpha/beta interferon family. Monomer. Post-translationally, this beta interferon does not have a disulfide bond.

It is found in the secreted. Functionally, type I interferon cytokine that plays a key role in the innate immune response to infection, developing tumors and other inflammatory stimuli. Signals via binding to high-affinity (IFNAR2) and low-affinity (IFNAR1) heterodimeric receptor, activating the canonical Jak-STAT signaling pathway resulting in transcriptional activation or repression of interferon-regulated genes that encode the effectors of the interferon response, such as antiviral proteins, regulators of cell proliferation and differentiation, and immunoregulatory proteins. Signals mostly via binding to a IFNAR1-IFNAR2 heterodimeric receptor, but can also function with IFNAR1 alone and independently of Jak-STAT pathways. Elicits a wide variety of responses, including antiviral and antibacterial activities, and can regulate the development of B-cells, myelopoiesis and lipopolysaccharide (LPS)-inducible production of tumor necrosis factor. Plays a role in neuronal homeostasis by regulating dopamine turnover and protecting dopaminergic neurons: acts by promoting neuronal autophagy and alpha-synuclein clearance, thereby preventing dopaminergic neuron loss. IFNB1 is more potent than interferon-alpha (IFN-alpha) in inducing the apoptotic and antiproliferative pathways required for control of tumor cell growth. The polypeptide is Interferon beta (Mus musculus (Mouse)).